The primary structure comprises 136 residues: HTH-type transcriptional regulator CysB (136 aa).

An HTH lysR-type domain is found at 1 to 59 (MDVRQLRSLVTLVEVRFSVSRAAECLHLVQSAVTQHLKQLEAELGTRLFVRHGKRLVGL). Residues 19 to 38 (VSRAAECLHLVQSAVTQHLK) constitute a DNA-binding region (H-T-H motif).

The protein belongs to the LysR transcriptional regulatory family.

In terms of biological role, this protein is a positive regulator of gene expression for the cysteine regulon. The protein is HTH-type transcriptional regulator CysB (cysB) of Thiocapsa roseopersicina.